We begin with the raw amino-acid sequence, 108 residues long: Cell cycle protein GpsB (108 aa).

A coiled-coil region spans residues 32–69 (LDNVIKDYENFNAQIEALKAENEALKKAKFQARNTVSA).

This sequence belongs to the GpsB family. As to quaternary structure, forms polymers through the coiled coil domains. Interacts with PBP1, MreC and EzrA.

It is found in the cytoplasm. Functionally, divisome component that associates with the complex late in its assembly, after the Z-ring is formed, and is dependent on DivIC and PBP2B for its recruitment to the divisome. Together with EzrA, is a key component of the system that regulates PBP1 localization during cell cycle progression. Its main role could be the removal of PBP1 from the cell pole after pole maturation is completed. Also contributes to the recruitment of PBP1 to the division complex. Not essential for septum formation. This chain is Cell cycle protein GpsB, found in Streptococcus pyogenes serotype M28 (strain MGAS6180).